The primary structure comprises 33 residues: Photosystem II reaction center protein Psb30 (33 aa).

A helical transmembrane segment spans residues 5-25 (VIAQLTMLTIAVITGPLVIFF).

This sequence belongs to the Psb30/Ycf12 family. As to quaternary structure, PSII is composed of 1 copy each of membrane proteins PsbA, PsbB, PsbC, PsbD, PsbE, PsbF, PsbH, PsbI, PsbJ, PsbK, PsbL, PsbM, PsbT, PsbX, PsbY, PsbZ, Psb30/Ycf12, peripheral proteins of the oxygen-evolving complex and a large number of cofactors. It forms dimeric complexes.

The protein resides in the plastid. It localises to the chloroplast thylakoid membrane. Its function is as follows. A core subunit of photosystem II (PSII), probably helps stabilize the reaction center. The sequence is that of Photosystem II reaction center protein Psb30 from Welwitschia mirabilis (Tree tumbo).